Consider the following 327-residue polypeptide: Mitochondrial coenzyme A transporter SLC25A42 (327 aa).

3 Solcar repeats span residues 34-120, 132-217, and 227-315; these read KSIL…YKKL, LTPI…LKKL, and PYPF…TQIL. The next 6 helical transmembrane spans lie at 36-56, 92-112, 138-158, 189-209, 233-253, and 296-316; these read ILNS…AVAP, LWRG…IQFC, LLAG…LDLV, LYRG…ISFF, LLFG…LDVV, and VKGP…QILL.

Belongs to the mitochondrial carrier (TC 2.A.29) family.

It is found in the mitochondrion inner membrane. It catalyses the reaction ADP(out) + CoA(in) = ADP(in) + CoA(out). The catalysed reaction is 3'-dephospho-CoA(in) + ADP(out) = 3'-dephospho-CoA(out) + ADP(in). The enzyme catalyses adenosine 3',5'-bisphosphate(in) + ADP(out) = adenosine 3',5'-bisphosphate(out) + ADP(in). It carries out the reaction AMP(in) + ADP(out) = AMP(out) + ADP(in). It catalyses the reaction dADP(in) + ADP(out) = dADP(out) + ADP(in). The catalysed reaction is ADP(in) + ATP(out) = ADP(out) + ATP(in). Mitochondrial carrier mediating the transport of coenzyme A (CoA) in mitochondria in exchange for intramitochondrial (deoxy)adenine nucleotides and adenosine 3',5'-diphosphate. In Xenopus tropicalis (Western clawed frog), this protein is Mitochondrial coenzyme A transporter SLC25A42 (slc25a42).